A 579-amino-acid chain; its full sequence is Zinc finger protein 384 (579 aa).

Residues 171–198 form a disordered region; that stretch reads TLTEEGGGGGGGGGTVAPPKPPRGRKKK. Residues 175–185 are compositionally biased toward gly residues; the sequence is EGGGGGGGGGT. 8 consecutive C2H2-type zinc fingers follow at residues 229–251, 257–279, 285–307, 318–340, 346–368, 374–398, 404–426, and 434–456; these read YRCRMCSLTFYSKSEMQIHSKSH, HKCPHCSKTFANSSYLAQHIRIH, YSCNFCEKSFRQLSHLQQHTRIH, HKCPHCSKTFANTSYLAQHLRIH, YNCSYCQKAFRQLSHLQQHTRIH, YKCAHPGCEKAFTQLSNLQSHRRQH, FKCHNCHRAYTDAASLEAHLSTH, and YTCTICSRAYTSETYLMKHMRKH. The segment covering 500-513 has biased composition (low complexity); that stretch reads QAQASQASQQQQQQ. Residues 500–553 are disordered; the sequence is QAQASQASQQQQQQQPPPPQPPHFQSPGAAPQGGGGGDSNQNPPPQCSFDLTPY. Positions 514–523 are enriched in pro residues; sequence QPPPPQPPHF.

It belongs to the krueppel C2H2-type zinc-finger protein family. Interacts with BCAR1. In terms of tissue distribution, expressed in osteocytes, osteoblasts, and chondrocytes in bone.

It is found in the nucleus. Transcription factor that binds the consensus DNA sequence [GC]AAAAA. Seems to bind and regulate the promoters of MMP1, MMP3, MMP7 and COL1A1. The polypeptide is Zinc finger protein 384 (Znf384) (Rattus norvegicus (Rat)).